The sequence spans 202 residues: AFG2-interacting ribosome maturation factor (202 aa).

As to quaternary structure, part of the 55LCC heterohexameric ATPase complex. Does not associate with pre-60S ribosomal particles.

The protein localises to the nucleus. It localises to the cytoplasm. Part of the 55LCC heterohexameric ATPase complex which is chromatin-associated and promotes replisome proteostasis to maintain replication fork progression and genome stability. Required for replication fork progression, sister chromatid cohesion, and chromosome stability. The ATPase activity is specifically enhanced by replication fork DNA and is coupled to cysteine protease-dependent cleavage of replisome substrates in response to replication fork damage. Uses ATPase activity to process replisome substrates in S-phase, facilitating their proteolytic turnover from chromatin to ensure DNA replication and mitotic fidelity. Involved in the cytoplasmic maturation steps of pre-60S ribosomal particles by promoting the release of shuttling protein RSL24D1/RLP24 from the pre-ribosomal particles. Plays an essential role in early embryonic development. This Danio rerio (Zebrafish) protein is AFG2-interacting ribosome maturation factor (airim).